The sequence spans 301 residues: Ribosomal protein L11 methyltransferase (301 aa).

Threonine 147, glycine 168, aspartate 190, and asparagine 237 together coordinate S-adenosyl-L-methionine.

This sequence belongs to the methyltransferase superfamily. PrmA family.

The protein localises to the cytoplasm. It catalyses the reaction L-lysyl-[protein] + 3 S-adenosyl-L-methionine = N(6),N(6),N(6)-trimethyl-L-lysyl-[protein] + 3 S-adenosyl-L-homocysteine + 3 H(+). Functionally, methylates ribosomal protein L11. The sequence is that of Ribosomal protein L11 methyltransferase from Synechococcus sp. (strain RCC307).